Consider the following 425-residue polypeptide: Probable mannosyltransferase KTR2 (425 aa).

Topologically, residues 1 to 13 (MQICKVFLTQVKK) are cytoplasmic. Residues 14-33 (LLFVSLLFCLIAQTCWLALV) form a helical; Signal-anchor for type II membrane protein membrane-spanning segment. Residues 34-89 (PYQRQLSLDSYFFRRSREVSSRYDFTRRRHMNQTLKLSSNTYNDEPLNKTKGIKNQ) are stem region. Topologically, residues 34 to 425 (PYQRQLSLDS…SGKYFLKHDS (392 aa)) are lumenal. N-linked (GlcNAc...) asparagine glycans are attached at residues N65, N81, N92, and N167. Residues 90–425 (RENATLLMLV…SGKYFLKHDS (336 aa)) are catalytic. E313 serves as the catalytic Nucleophile.

The protein belongs to the glycosyltransferase 15 family.

The protein localises to the golgi apparatus membrane. It participates in protein modification; protein glycosylation. Involved in N-linked glycosylation. Transfers an alpha-D-mannosyl residue from GDP-mannose into lipid-linked oligosaccharide, forming an alpha-(1-&gt;2)-D-mannosyl-D-mannose linkage. The sequence is that of Probable mannosyltransferase KTR2 (KTR2) from Saccharomyces cerevisiae (strain ATCC 204508 / S288c) (Baker's yeast).